Consider the following 364-residue polypeptide: Cyclin-D3-2 (364 aa).

Residues 331–364 (PPGRPIKRGAAAATTADPLPADEESRDAWPPYAA) are disordered. Low complexity predominate over residues 340–349 (AAAATTADPL).

Belongs to the cyclin family. Cyclin D subfamily.

The polypeptide is Cyclin-D3-2 (CYCD3-2) (Oryza sativa subsp. japonica (Rice)).